A 254-amino-acid polypeptide reads, in one-letter code: Pyruvate dehydrogenase complex repressor (254 aa).

The HTH gntR-type domain occupies 9-77 (PKLSDVIEQQ…QGGGTFVQSS (69 aa)). The segment at residues 37 to 56 (ERELAKQFDVSRPSLREAIQ) is a DNA-binding region (H-T-H motif).

Transcriptional repressor for the pyruvate dehydrogenase complex genes aceEF and lpd. This is Pyruvate dehydrogenase complex repressor (pdhR) from Salmonella typhi.